The sequence spans 290 residues: Inactive tau-tubulin kinase ttbk-6 (290 aa).

Residues 1–240 (MEDHVLKKLN…FWQVMENEKI (240 aa)) enclose the Protein kinase domain. Disordered stretches follow at residues 244–263 (SKFD…AAWE) and 268–290 (RYFQ…DFVL).

The protein belongs to the protein kinase superfamily. CK1 Ser/Thr protein kinase family.

This Caenorhabditis elegans protein is Inactive tau-tubulin kinase ttbk-6.